The chain runs to 520 residues: Succinyl-CoA:3-ketoacid coenzyme A transferase 2A, mitochondrial (520 aa).

The transit peptide at 1–39 directs the protein to the mitochondrion; the sequence is MAALRLLAWAFSRRVSAHRPQPTLPHHLIRHYPTTRCGK. Residues 280–299 are disordered; sequence ERLTTRDSPPAPGSKDQDPK. E342 functions as the 5-glutamyl coenzyme A thioester intermediate in the catalytic mechanism.

The protein belongs to the 3-oxoacid CoA-transferase family. Homodimer. In terms of tissue distribution, expressed in flagella of epididymal sperm.

It localises to the mitochondrion. The enzyme catalyses a 3-oxo acid + succinyl-CoA = a 3-oxoacyl-CoA + succinate. Its pathway is ketone metabolism; succinyl-CoA degradation; acetoacetyl-CoA from succinyl-CoA: step 1/1. Functionally, key enzyme for ketone body catabolism. Transfers the CoA moiety from succinate to acetoacetate. Formation of the enzyme-CoA intermediate proceeds via an unstable anhydride species formed between the carboxylate groups of the enzyme and substrate. Probably play and important roles in the energy metabolism of spermatozoa. This chain is Succinyl-CoA:3-ketoacid coenzyme A transferase 2A, mitochondrial (Oxct2a), found in Rattus norvegicus (Rat).